Reading from the N-terminus, the 142-residue chain is Transcription antitermination protein NusB (142 aa).

The protein belongs to the NusB family.

Involved in transcription antitermination. Required for transcription of ribosomal RNA (rRNA) genes. Binds specifically to the boxA antiterminator sequence of the ribosomal RNA (rrn) operons. This is Transcription antitermination protein NusB from Thermobifida fusca (strain YX).